The following is an 83-amino-acid chain: RNA-binding protein Hfq (83 aa).

One can recognise a Sm domain in the interval 9–68; that stretch reads DPYLNALRKERIPVSIFLVNGIKLQGQIESFDQFVILLKNTVSQMVYKHAISTVVPARNV.

Belongs to the Hfq family. Homohexamer.

In terms of biological role, RNA chaperone that binds small regulatory RNA (sRNAs) and mRNAs to facilitate mRNA translational regulation in response to envelope stress, environmental stress and changes in metabolite concentrations. Also binds with high specificity to tRNAs. The chain is RNA-binding protein Hfq from Marinobacter nauticus (strain ATCC 700491 / DSM 11845 / VT8) (Marinobacter aquaeolei).